A 364-amino-acid chain; its full sequence is Lipoyl synthase, chloroplastic (364 aa).

A chloroplast-targeting transit peptide spans 1–70 (MEQTLFNPSI…PNVKKPEWLR (70 aa)). The segment covering 32–52 (STNSPSSNTKTTTVTVPSKKT) has biased composition (low complexity). Residues 32–64 (STNSPSSNTKTTTVTVPSKKTMGPYTGRDPNVK) are disordered. [4Fe-4S] cluster-binding residues include Cys95, Cys100, Cys106, Cys126, Cys130, Cys133, and Ser341. The Radical SAM core domain maps to 109-330 (GGGDGIATAT…KEYGESIGFR (222 aa)).

Belongs to the radical SAM superfamily. Lipoyl synthase family. [4Fe-4S] cluster is required as a cofactor.

Its subcellular location is the plastid. The protein resides in the chloroplast. The enzyme catalyses [[Fe-S] cluster scaffold protein carrying a second [4Fe-4S](2+) cluster] + N(6)-octanoyl-L-lysyl-[protein] + 2 oxidized [2Fe-2S]-[ferredoxin] + 2 S-adenosyl-L-methionine + 4 H(+) = [[Fe-S] cluster scaffold protein] + N(6)-[(R)-dihydrolipoyl]-L-lysyl-[protein] + 4 Fe(3+) + 2 hydrogen sulfide + 2 5'-deoxyadenosine + 2 L-methionine + 2 reduced [2Fe-2S]-[ferredoxin]. It participates in protein modification; protein lipoylation via endogenous pathway; protein N(6)-(lipoyl)lysine from octanoyl-[acyl-carrier-protein]: step 2/2. Its function is as follows. Catalyzes the radical-mediated insertion of two sulfur atoms into the C-6 and C-8 positions of the octanoyl moiety bound to the lipoyl domains of lipoate-dependent enzymes, thereby converting the octanoylated domains into lipoylated derivatives. The polypeptide is Lipoyl synthase, chloroplastic (Ricinus communis (Castor bean)).